Consider the following 493-residue polypeptide: ATP synthase subunit beta, chloroplastic (493 aa).

170–177 (GGAGVGKT) lines the ATP pocket.

The protein belongs to the ATPase alpha/beta chains family. In terms of assembly, F-type ATPases have 2 components, CF(1) - the catalytic core - and CF(0) - the membrane proton channel. CF(1) has five subunits: alpha(3), beta(3), gamma(1), delta(1), epsilon(1). CF(0) has four main subunits: a(1), b(1), b'(1) and c(9-12).

It is found in the plastid. The protein resides in the chloroplast thylakoid membrane. The enzyme catalyses ATP + H2O + 4 H(+)(in) = ADP + phosphate + 5 H(+)(out). Functionally, produces ATP from ADP in the presence of a proton gradient across the membrane. The catalytic sites are hosted primarily by the beta subunits. The sequence is that of ATP synthase subunit beta, chloroplastic from Adiantum capillus-veneris (Maidenhair fern).